The following is a 324-amino-acid chain: NAD kinase (324 aa).

The Proton acceptor role is filled by aspartate 89. Residues 89 to 90 (DG), arginine 94, 163 to 164 (NE), aspartate 193, and 204 to 209 (TAYAFS) each bind NAD(+).

Belongs to the NAD kinase family. It depends on a divalent metal cation as a cofactor.

Its subcellular location is the cytoplasm. It catalyses the reaction NAD(+) + ATP = ADP + NADP(+) + H(+). In terms of biological role, involved in the regulation of the intracellular balance of NAD and NADP, and is a key enzyme in the biosynthesis of NADP. Catalyzes specifically the phosphorylation on 2'-hydroxyl of the adenosine moiety of NAD to yield NADP. The chain is NAD kinase from Nocardia farcinica (strain IFM 10152).